An 88-amino-acid chain; its full sequence is Small ribosomal subunit protein bS18 (88 aa).

A compositionally biased stretch (low complexity) spans 1 to 11 (MTTANTTAKDN). A disordered region spans residues 1–21 (MTTANTTAKDNAATKKRGRKA).

This sequence belongs to the bacterial ribosomal protein bS18 family. Part of the 30S ribosomal subunit. Forms a tight heterodimer with protein bS6.

Functionally, binds as a heterodimer with protein bS6 to the central domain of the 16S rRNA, where it helps stabilize the platform of the 30S subunit. This is Small ribosomal subunit protein bS18 from Thermoanaerobacter pseudethanolicus (strain ATCC 33223 / 39E) (Clostridium thermohydrosulfuricum).